Reading from the N-terminus, the 156-residue chain is C-type lectin lectoxin-Phi1 (156 aa).

An N-terminal signal peptide occupies residues 1 to 23 (MGRFIFVSLGLLVLAFSLSGIGA). Disulfide bonds link Cys27–Cys38, Cys55–Cys154, and Cys129–Cys146. The 122-residue stretch at 34 to 155 (HNVSCYKLIN…CNRRHRFLCK (122 aa)) folds into the C-type lectin domain. Asn35 and Asn109 each carry an N-linked (GlcNAc...) asparagine glycan. The Mannose-binding motif lies at 119 to 121 (EPN). Residues Glu127, Asn142, and Asp143 each coordinate Ca(2+).

It belongs to the true venom lectin family. In terms of tissue distribution, expressed by the venom gland.

The protein localises to the secreted. Its function is as follows. Mannose-binding lectin which recognizes specific carbohydrate structures and agglutinates a variety of animal cells by binding to cell-surface glycoproteins and glycolipids. May be a calcium-dependent lectin. This Philodryas olfersii (Green snake) protein is C-type lectin lectoxin-Phi1.